A 254-amino-acid chain; its full sequence is Probable pectate lyase E (254 aa).

The N-terminal stretch at 1-17 is a signal peptide; it reads MLQSLLLLPLFLTSAFA. N-linked (GlcNAc...) asparagine glycosylation occurs at Asn175. The disordered stretch occupies residues 228–254; that stretch reads NNNGKEPKKKSSGPSKACEYNQPLKKC.

It belongs to the polysaccharide lyase 3 family. It depends on Ca(2+) as a cofactor.

It is found in the secreted. It carries out the reaction Eliminative cleavage of (1-&gt;4)-alpha-D-galacturonan to give oligosaccharides with 4-deoxy-alpha-D-galact-4-enuronosyl groups at their non-reducing ends.. Pectinolytic enzyme consist of four classes of enzymes: pectin lyase, polygalacturonase, pectin methylesterase and rhamnogalacturonase. Among pectinolytic enzymes, pectin lyase is the most important in depolymerization of pectin, since it cleaves internal glycosidic bonds of highly methylated pectins. Favors pectate, the anion, over pectin, the methyl ester. The protein is Probable pectate lyase E (plyE) of Aspergillus clavatus (strain ATCC 1007 / CBS 513.65 / DSM 816 / NCTC 3887 / NRRL 1 / QM 1276 / 107).